Reading from the N-terminus, the 373-residue chain is Chaperone protein DnaJ (373 aa).

Residues 5-70 enclose the J domain; the sequence is DYYELLEVDR…EKRALYDQYG (66 aa). Residues 134 to 211 form a CR-type zinc finger; sequence GTQKEVHYSF…CSGKGYRIEK (78 aa). Zn(2+) is bound by residues C147, C150, C163, C166, C185, C188, C199, and C202. CXXCXGXG motif repeat units lie at residues 147–154, 163–170, 185–192, and 199–206; these read CSACKGTG, CPECHGRG, CPRCHGQG, and CEECSGKG.

It belongs to the DnaJ family. As to quaternary structure, homodimer. It depends on Zn(2+) as a cofactor.

Its subcellular location is the cytoplasm. In terms of biological role, participates actively in the response to hyperosmotic and heat shock by preventing the aggregation of stress-denatured proteins and by disaggregating proteins, also in an autonomous, DnaK-independent fashion. Unfolded proteins bind initially to DnaJ; upon interaction with the DnaJ-bound protein, DnaK hydrolyzes its bound ATP, resulting in the formation of a stable complex. GrpE releases ADP from DnaK; ATP binding to DnaK triggers the release of the substrate protein, thus completing the reaction cycle. Several rounds of ATP-dependent interactions between DnaJ, DnaK and GrpE are required for fully efficient folding. Also involved, together with DnaK and GrpE, in the DNA replication of plasmids through activation of initiation proteins. In Nitratiruptor sp. (strain SB155-2), this protein is Chaperone protein DnaJ.